Consider the following 299-residue polypeptide: ATP phosphoribosyltransferase (299 aa).

This sequence belongs to the ATP phosphoribosyltransferase family. Long subfamily. Mg(2+) is required as a cofactor.

Its subcellular location is the cytoplasm. It catalyses the reaction 1-(5-phospho-beta-D-ribosyl)-ATP + diphosphate = 5-phospho-alpha-D-ribose 1-diphosphate + ATP. The protein operates within amino-acid biosynthesis; L-histidine biosynthesis; L-histidine from 5-phospho-alpha-D-ribose 1-diphosphate: step 1/9. With respect to regulation, feedback inhibited by histidine. Its function is as follows. Catalyzes the condensation of ATP and 5-phosphoribose 1-diphosphate to form N'-(5'-phosphoribosyl)-ATP (PR-ATP). Has a crucial role in the pathway because the rate of histidine biosynthesis seems to be controlled primarily by regulation of HisG enzymatic activity. The protein is ATP phosphoribosyltransferase of Shewanella pealeana (strain ATCC 700345 / ANG-SQ1).